We begin with the raw amino-acid sequence, 731 residues long: MIRLAQQTQVLKGKPPNQFVPHPTKNSLTHPMKFNGTIAMEHHEHNYAIPYTPATFNNPALATYQVSPANHFVPHFGGNIGANNNNHLAQNNSNNSNNHHNNNRNHHHNNNRNHHQNNHNHSKYNNSNQGNSISPDSPWFHKVCAFEDCVSQTLYMSQTPRRQNMKHHSEHPNSNANPLFWDSIGRAMGLYHDLLTTPELNSDRVSKLVHLLHNGLRANRNQLTRMNKKPDYDSQSFHKEMTNYLCKSLREISEDVLNGKVELNEYGAMHLITAFKELLLFEEAVDIWKAAINGQNTYTSNIFLNPRVVGVILPILYDNGVSYPEIQALYEKSSSMINYFHPNLSVGMIRASLSASENDMALKLFQKLCQESTEMKYGYLIETHLSFIGECKDLNVAQTFFDKALNDEMPYKIDLQVSYVKSFLRNIWSQTRDFNHIYQIWYKSSLHYGRNVNHGISSSLNDTFFDIFFENYAVDKMQGFQTLQNIIQTYNNIKHIDEPFFNIILAKCTVWHDRSILEYIDKSYEAYHIPKTIVAYRILLKSMGSVDDASNAEILQRWMDLIRKSDEIGQRFIANADWAALRDATVTWTQNDRDSKKSNMNSTQISRTATPSPSLTPMDTPAPEHLFNNPQNPMDFYSHPALQAATASGAFDEFAAEAASSSIPVDGRMVLYLKIVKRYSPYCRDSRQLARLTTGTAVKYSVLQEVLNQFQTLIVNDIPIPELHNLKPTCV.

Positions 1-10 (MIRLAQQTQV) are enriched in polar residues. Disordered regions lie at residues 1–29 (MIRLAQQTQVLKGKPPNQFVPHPTKNSLT), 77–133 (GGNI…GNSI), and 590–630 (QNDR…FNNP). Over residues 83 to 100 (NNNNHLAQNNSNNSNNHH) the composition is skewed to low complexity. A compositionally biased stretch (basic residues) spans 101-122 (NNNRNHHHNNNRNHHQNNHNHS). The residue at position 132 (Ser132) is a Phosphoserine. The span at 598-617 (SNMNSTQISRTATPSPSLTP) shows a compositional bias: polar residues.

The protein belongs to the RMD9 family. In terms of assembly, monomer. Phosphorylated. Phosphorylation promotes binding to RNA.

The protein localises to the mitochondrion inner membrane. Functionally, may be involved in the processing or stability of mitochondrial mRNAs. The sequence is that of RNA-binding protein RMD9-like, mitochondrial from Saccharomyces cerevisiae (strain ATCC 204508 / S288c) (Baker's yeast).